The primary structure comprises 166 residues: 2-amino-4-hydroxy-6-hydroxymethyldihydropteridine pyrophosphokinase (166 aa).

This sequence belongs to the HPPK family.

It carries out the reaction 6-hydroxymethyl-7,8-dihydropterin + ATP = (7,8-dihydropterin-6-yl)methyl diphosphate + AMP + H(+). It functions in the pathway cofactor biosynthesis; tetrahydrofolate biosynthesis; 2-amino-4-hydroxy-6-hydroxymethyl-7,8-dihydropteridine diphosphate from 7,8-dihydroneopterin triphosphate: step 4/4. Functionally, catalyzes the transfer of pyrophosphate from adenosine triphosphate (ATP) to 6-hydroxymethyl-7,8-dihydropterin, an enzymatic step in folate biosynthesis pathway. This chain is 2-amino-4-hydroxy-6-hydroxymethyldihydropteridine pyrophosphokinase (folK), found in Streptococcus pyogenes serotype M18 (strain MGAS8232).